Consider the following 225-residue polypeptide: Membrane protein (225 aa).

Over 1-20 (MSNETNCTLDFEQSVELFKE) the chain is Virion surface. Residues 21 to 41 (YNLFITAFLLFLTIILQYGYA) traverse the membrane as a helical segment. Residues 42–51 (TRSKFIYILK) are Intravirion-facing. A helical membrane pass occupies residues 52 to 72 (MIVLWCFWPLNIAVGVISCIY). The Virion surface segment spans residues 73–77 (PPNTG). Residues 78–98 (GLVAAIILTVFACLSFVGYWI) traverse the membrane as a helical segment. Residues 99 to 225 (QSIRLFKRCR…VATGGSSLYT (127 aa)) lie on the Intravirion side of the membrane.

The protein belongs to the gammacoronaviruses M protein family. In terms of assembly, homomultimer. Interacts with envelope E protein in the budding compartment of the host cell, which is located between endoplasmic reticulum and the Golgi complex. Forms a complex with HE and S proteins. Interacts with nucleocapsid N protein. This interaction probably participates in RNA packaging into the virus.

Its subcellular location is the virion membrane. The protein resides in the host Golgi apparatus membrane. Its function is as follows. Component of the viral envelope that plays a central role in virus morphogenesis and assembly via its interactions with other viral proteins. The sequence is that of Membrane protein from Gallus gallus (Chicken).